Consider the following 1609-residue polypeptide: Probable cation-transporting ATPase I (1609 aa).

The next 10 helical transmembrane spans lie at 30-50 (GAVNTMQMLASPVAEFAWPVV), 176-196 (LAILMPLTAAVMDLVALSAAV), 238-258 (IALSITTAAASGLTQAVGTPL), 357-377 (LIAAASALLAGGGTEDAAGAI), 641-661 (VHLAQGGTTLAGLLLITASAG), 673-693 (WFSPVNAAAATALVTGVVSAS), 778-798 (ILAVGAAASAIVGSNIDALLV), 921-941 (LFEGSAIVAGHARAIVVATGV), 969-989 (TSKVLPLTLAGGAAVTGLALL), and 997-1017 (AVADGVAIAVAAVPEGLPLVA). The active-site 4-aspartylphosphate intermediate is the D1053. Mg(2+)-binding residues include D1335 and D1339. 2 consecutive transmembrane segments (helical) span residues 1396 to 1416 (ILVGGNVGEVVFTIIGTVFGA) and 1426 to 1446 (LLLVNLLTDMFPALSIAVTSQ). The tract at residues 1447-1476 (YEEPGEDEYQTDEEADEARRTHQHEVLTGP) is disordered. The span at 1449 to 1462 (EPGEDEYQTDEEAD) shows a compositional bias: acidic residues. The next 2 helical transmembrane spans lie at 1542–1562 (VVATALGSAGVLIGIIQTPVI) and 1573–1593 (PIAWSGVITATAGATAVSVLA).

The protein belongs to the cation transport ATPase (P-type) (TC 3.A.3) family.

It localises to the cell membrane. The enzyme catalyses ATP + H2O = ADP + phosphate + H(+). This is Probable cation-transporting ATPase I (ctpI) from Mycobacterium leprae (strain TN).